Reading from the N-terminus, the 156-residue chain is Urease accessory protein UreE (156 aa).

A disordered region spans residues 133 to 156 (RPESGAYGSGRTMGHDHGPFHVHA). The segment covering 145–156 (MGHDHGPFHVHA) has biased composition (basic and acidic residues).

This sequence belongs to the UreE family.

It localises to the cytoplasm. Functionally, involved in urease metallocenter assembly. Binds nickel. Probably functions as a nickel donor during metallocenter assembly. The chain is Urease accessory protein UreE from Rhodobacter capsulatus (Rhodopseudomonas capsulata).